The chain runs to 321 residues: Beta-ketoacyl-[acyl-carrier-protein] synthase III (321 aa).

Catalysis depends on residues Cys113 and His248. Residues 249-253 (QANAR) are ACP-binding. Asn278 is an active-site residue.

The protein belongs to the thiolase-like superfamily. FabH family. In terms of assembly, homodimer.

Its subcellular location is the cytoplasm. The catalysed reaction is malonyl-[ACP] + acetyl-CoA + H(+) = 3-oxobutanoyl-[ACP] + CO2 + CoA. The protein operates within lipid metabolism; fatty acid biosynthesis. In terms of biological role, catalyzes the condensation reaction of fatty acid synthesis by the addition to an acyl acceptor of two carbons from malonyl-ACP. Catalyzes the first condensation reaction which initiates fatty acid synthesis and may therefore play a role in governing the total rate of fatty acid production. Possesses both acetoacetyl-ACP synthase and acetyl transacylase activities. Its substrate specificity determines the biosynthesis of branched-chain and/or straight-chain of fatty acids. This Erythrobacter litoralis (strain HTCC2594) protein is Beta-ketoacyl-[acyl-carrier-protein] synthase III.